Here is a 368-residue protein sequence, read N- to C-terminus: Anaphase-promoting complex subunit MND2 (368 aa).

2 disordered regions span residues 140–167 and 286–336; these read AQNA…NGSI and RNPY…GITP. Over residues 149 to 162 the composition is skewed to basic and acidic residues; sequence EDFRQHDSREEDPR. Position 293 is a phosphoserine (Ser-293).

This sequence belongs to the APC15 family. The APC/C is composed of at least 13 subunits that stay tightly associated throughout the cell cycle: APC1, APC2, APC4, APC5, APC9, APC11, CDC16, CDC23, CDC26, CDC27, DOC1, MND2 and SWM1. MND2 interacts directly with APC1, APC5 and CDC23.

It participates in protein modification; protein ubiquitination. In terms of biological role, component of the anaphase promoting complex/cyclosome (APC/C), a cell cycle-regulated E3 ubiquitin-protein ligase complex that controls progression through mitosis and the G1 phase of the cell cycle. The APC/C is thought to confer substrate specificity and, in the presence of ubiquitin-conjugating E2 enzymes, it catalyzes the formation of protein-ubiquitin conjugates that are subsequently degraded by the 26S proteasome. In early mitosis, the APC/C is activated by CDC20 and targets securin PDS1, the B-type cyclin CLB5, and other anaphase inhibitory proteins for proteolysis, thereby triggering the separation of sister chromatids at the metaphase-to-anaphase transition. In late mitosis and in G1, degradation of CLB5 allows activation of the APC/C by CDH1, which is needed to destroy CDC20 and the B-type cyclin CLB2 to allow exit from mitosis and creating the low CDK state necessary for cytokinesis and for reforming prereplicative complexes in G1 prior to another round of replication. The chain is Anaphase-promoting complex subunit MND2 (MND2) from Saccharomyces cerevisiae (strain ATCC 204508 / S288c) (Baker's yeast).